Reading from the N-terminus, the 84-residue chain is MQTHEILLKIKEIAKSKNFNLNLDEKTINQPLRELKIDSLDMFSIVVSLENEFGISFDDEKLMNLKNLADLVLEVKNLLAKKGV.

In terms of domain architecture, Carrier spans 4–79 (HEILLKIKEI…DLVLEVKNLL (76 aa)). Ser-39 carries the O-(pantetheine 4'-phosphoryl)serine modification.

Post-translationally, 4'-phosphopantetheine is transferred from CoA to a specific serine of the apo-ACP-like protein.

The protein operates within lipid metabolism; fatty acid biosynthesis. Its function is as follows. Carrier of the growing fatty acid chain in fatty acid biosynthesis. The chain is Acyl carrier protein homolog from Mycoplasma genitalium (strain ATCC 33530 / DSM 19775 / NCTC 10195 / G37) (Mycoplasmoides genitalium).